The sequence spans 332 residues: Arrestin domain-containing protein 5 (332 aa).

Residues 311-332 are disordered; it reads SNQTAAGCRTRAPLPVSPDQQN.

This sequence belongs to the arrestin family.

It localises to the membrane. Plays an essential role in spermatogenesis. May be involved in the anchoring of the sperm head to the tail during spermatogenesis by affecting SEC22A-mediated SUN5 and NDC1 transport and localization. This chain is Arrestin domain-containing protein 5 (ARRDC5), found in Bos taurus (Bovine).